The sequence spans 329 residues: MDWLLLANRVLDGADITDDEALAILNCPDDELLLLLQGAYRIRKTYYGNKVKLNMIMNAKSGLCPENCGYCSQSSISTAPIPTYKMVNKETILQGAKRAYEAKIGTYCIVASGRGPSDKEIDIVVSAVKEIKETYGLKVCACLGILKPEQALRLKEAGVDRYNHNINTSKEHHPHITTSHTYDDRVRTVETVKEAGMSPCSGVIIGMKETKQDVIAMARSLKALDADSIPVNFLHAIDGTPLEGTKELNPRYCLKVLALFRYINPTKEIRISGGREVNLRSLQPLGLYAANSIFVGDYLTTAGQEKHADFQMLEDLGFDIDFAPASYAR.

Residues 46–275 (YYGNKVKLNM…TKEIRISGGR (230 aa)) enclose the Radical SAM core domain. Residues Cys64, Cys68, and Cys71 each contribute to the [4Fe-4S] cluster site. Residues Cys108, Cys140, Cys200, and Arg270 each coordinate [2Fe-2S] cluster.

It belongs to the radical SAM superfamily. Biotin synthase family. As to quaternary structure, homodimer. Requires [4Fe-4S] cluster as cofactor. It depends on [2Fe-2S] cluster as a cofactor.

It catalyses the reaction (4R,5S)-dethiobiotin + (sulfur carrier)-SH + 2 reduced [2Fe-2S]-[ferredoxin] + 2 S-adenosyl-L-methionine = (sulfur carrier)-H + biotin + 2 5'-deoxyadenosine + 2 L-methionine + 2 oxidized [2Fe-2S]-[ferredoxin]. It participates in cofactor biosynthesis; biotin biosynthesis; biotin from 7,8-diaminononanoate: step 2/2. Catalyzes the conversion of dethiobiotin (DTB) to biotin by the insertion of a sulfur atom into dethiobiotin via a radical-based mechanism. This chain is Biotin synthase, found in Anoxybacillus flavithermus (strain DSM 21510 / WK1).